A 472-amino-acid polypeptide reads, in one-letter code: ATP synthase subunit beta (472 aa).

149 to 156 (GGAGVGKT) serves as a coordination point for ATP.

The protein belongs to the ATPase alpha/beta chains family. As to quaternary structure, F-type ATPases have 2 components, CF(1) - the catalytic core - and CF(0) - the membrane proton channel. CF(1) has five subunits: alpha(3), beta(3), gamma(1), delta(1), epsilon(1). CF(0) has three main subunits: a(1), b(2) and c(9-12). The alpha and beta chains form an alternating ring which encloses part of the gamma chain. CF(1) is attached to CF(0) by a central stalk formed by the gamma and epsilon chains, while a peripheral stalk is formed by the delta and b chains.

The protein localises to the cell inner membrane. It catalyses the reaction ATP + H2O + 4 H(+)(in) = ADP + phosphate + 5 H(+)(out). Produces ATP from ADP in the presence of a proton gradient across the membrane. The catalytic sites are hosted primarily by the beta subunits. The protein is ATP synthase subunit beta of Pelagibacter ubique (strain HTCC1062).